We begin with the raw amino-acid sequence, 54 residues long: Ovomucoid (54 aa).

The Kazal-like domain maps to 4–54 (VDCSDYPRPDCTLEYMPLCGSDNKTYGNKCNFCNAVVDSNGTLTLSHFGKC). 3 cysteine pairs are disulfide-bonded: C6–C36, C14–C33, and C22–C54. N43 is a glycosylation site (N-linked (GlcNAc...) asparagine).

It localises to the secreted. This Dendrocygna eytoni (Plumed whistling-duck) protein is Ovomucoid.